Consider the following 968-residue polypeptide: Bifunctional glyoxylate cycle protein (968 aa).

Positions 1 to 443 (MSSAAKNFYQ…AVASQDEEIL (443 aa)) are isocitrate lyase. Residues 444 to 968 (SLTAQNVAGD…AYDRLVSEGY (525 aa)) form a malate synthase region. R601 serves as the catalytic Proton acceptor. D881 (proton donor) is an active-site residue.

The protein in the N-terminal section; belongs to the isocitrate lyase/PEP mutase superfamily. Isocitrate lyase family. In the C-terminal section; belongs to the malate synthase family. In terms of tissue distribution, intestinal and body wall muscle cells.

It carries out the reaction D-threo-isocitrate = glyoxylate + succinate. The catalysed reaction is glyoxylate + acetyl-CoA + H2O = (S)-malate + CoA + H(+). The protein operates within carbohydrate metabolism; glyoxylate cycle; (S)-malate from isocitrate: step 1/2. It participates in carbohydrate metabolism; glyoxylate cycle; (S)-malate from isocitrate: step 2/2. This Caenorhabditis elegans protein is Bifunctional glyoxylate cycle protein (icl-1).